A 576-amino-acid chain; its full sequence is Lipoprotein LpqB (576 aa).

The N-terminal stretch at 1–16 (MRRVTRTIAAAGAAIA) is a signal peptide. The N-palmitoyl cysteine moiety is linked to residue cysteine 17. The S-diacylglycerol cysteine moiety is linked to residue cysteine 17.

Belongs to the LpqB lipoprotein family.

It is found in the cell membrane. The protein is Lipoprotein LpqB of Bifidobacterium longum (strain NCC 2705).